The following is a 713-amino-acid chain: Glutamine-dependent NAD(+) synthetase (713 aa).

One can recognise a CN hydrolase domain in the interval 4 to 275; the sequence is VTLATCNLNQ…IEVITATVDL (272 aa). The Proton acceptor; for glutaminase activity role is filled by Glu-44. Lys-114 (for glutaminase activity) is an active-site residue. The active-site Nucleophile; for glutaminase activity is Cys-175. The tract at residues 324 to 703 is ligase; that stretch reads YNTPAEEIGF…QRPQLKNTVN (380 aa). Residue 354–361 participates in ATP binding; sequence PLSGGADS. Ser-356 is an active-site residue.

In the C-terminal section; belongs to the NAD synthetase family.

It carries out the reaction deamido-NAD(+) + L-glutamine + ATP + H2O = L-glutamate + AMP + diphosphate + NAD(+) + H(+). It participates in cofactor biosynthesis; NAD(+) biosynthesis; NAD(+) from deamido-NAD(+) (L-Gln route): step 1/1. In Dictyostelium discoideum (Social amoeba), this protein is Glutamine-dependent NAD(+) synthetase (nadsyn1).